We begin with the raw amino-acid sequence, 180 residues long: Large ribosomal subunit protein uL15 (180 aa).

The segment at 1–62 (MKKERLEQAS…KTAGRGSKGQ (62 aa)) is disordered.

The protein belongs to the universal ribosomal protein uL15 family. In terms of assembly, part of the 50S ribosomal subunit.

Functionally, binds to the 23S rRNA. This Leptospira interrogans serogroup Icterohaemorrhagiae serovar copenhageni (strain Fiocruz L1-130) protein is Large ribosomal subunit protein uL15.